The sequence spans 302 residues: Sulfate adenylyltransferase subunit 2 (302 aa).

The protein belongs to the PAPS reductase family. CysD subfamily. In terms of assembly, heterodimer composed of CysD, the smaller subunit, and CysN.

The catalysed reaction is sulfate + ATP + H(+) = adenosine 5'-phosphosulfate + diphosphate. It functions in the pathway sulfur metabolism; hydrogen sulfide biosynthesis; sulfite from sulfate: step 1/3. In terms of biological role, with CysN forms the ATP sulfurylase (ATPS) that catalyzes the adenylation of sulfate producing adenosine 5'-phosphosulfate (APS) and diphosphate, the first enzymatic step in sulfur assimilation pathway. APS synthesis involves the formation of a high-energy phosphoric-sulfuric acid anhydride bond driven by GTP hydrolysis by CysN coupled to ATP hydrolysis by CysD. The chain is Sulfate adenylyltransferase subunit 2 from Buchnera aphidicola subsp. Acyrthosiphon pisum (strain 5A).